The primary structure comprises 261 residues: Ribosomal RNA small subunit methyltransferase J (261 aa).

Residues 101–102, 117–118, 153–154, and aspartate 176 contribute to the S-adenosyl-L-methionine site; these read RD, ER, and SS.

Belongs to the methyltransferase superfamily. RsmJ family.

The protein localises to the cytoplasm. The catalysed reaction is guanosine(1516) in 16S rRNA + S-adenosyl-L-methionine = N(2)-methylguanosine(1516) in 16S rRNA + S-adenosyl-L-homocysteine + H(+). Specifically methylates the guanosine in position 1516 of 16S rRNA. This is Ribosomal RNA small subunit methyltransferase J from Vibrio cholerae serotype O1 (strain ATCC 39315 / El Tor Inaba N16961).